Consider the following 214-residue polypeptide: Type IV major pilin protein PilE1 (214 aa).

Residues 1–7 constitute a propeptide, leader sequence; sequence MNTLQKG. At F8 the chain carries N-methylphenylalanine. A helical membrane pass occupies residues 8–28; the sequence is FTLIELMIVIAIVGILAAVAL. C127 and C161 are oxidised to a cystine. Residues 182–214 are disordered; sequence AGTDAVTADTTGKDKEIDTKHLPSTCRDKSSAE. Basic and acidic residues predominate over residues 192–214; sequence TGKDKEIDTKHLPSTCRDKSSAE.

This sequence belongs to the N-Me-Phe pilin family. As to quaternary structure, the pili are polar flexible filaments of about 5.4 nanometers diameter and 2.5 micrometers average length; they consist of only a single polypeptide chain arranged in a helical configuration of five subunits per turn in the assembled pilus.

The protein localises to the fimbrium. It localises to the membrane. In terms of biological role, major component of the type IV pilus (T4P) that plays a role in cellular adherence, microcolony formation, resistance to neutrophil mediated killing, twitching motility as well as transformation. Mediates the attachment and the formation of bacterial microcolonies on host epithelial cells. Mechanistically, pili retractation induces host NF-kappa-B activation in infected cells, which is temporally associated with the formation of gonococcal microcolonies. The chain is Type IV major pilin protein PilE1 (pilE1) from Neisseria gonorrhoeae.